Consider the following 272-residue polypeptide: Indole-3-glycerol phosphate synthase (272 aa).

The protein belongs to the TrpC family.

It carries out the reaction 1-(2-carboxyphenylamino)-1-deoxy-D-ribulose 5-phosphate + H(+) = (1S,2R)-1-C-(indol-3-yl)glycerol 3-phosphate + CO2 + H2O. It participates in amino-acid biosynthesis; L-tryptophan biosynthesis; L-tryptophan from chorismate: step 4/5. The polypeptide is Indole-3-glycerol phosphate synthase (Mycolicibacterium paratuberculosis (strain ATCC BAA-968 / K-10) (Mycobacterium paratuberculosis)).